We begin with the raw amino-acid sequence, 494 residues long: UPF0371 protein SUB1165 (494 aa).

Belongs to the UPF0371 family.

The polypeptide is UPF0371 protein SUB1165 (Streptococcus uberis (strain ATCC BAA-854 / 0140J)).